A 259-amino-acid chain; its full sequence is 3-deoxy-manno-octulosonate cytidylyltransferase (259 aa).

Belongs to the KdsB family.

The protein localises to the cytoplasm. The enzyme catalyses 3-deoxy-alpha-D-manno-oct-2-ulosonate + CTP = CMP-3-deoxy-beta-D-manno-octulosonate + diphosphate. The protein operates within nucleotide-sugar biosynthesis; CMP-3-deoxy-D-manno-octulosonate biosynthesis; CMP-3-deoxy-D-manno-octulosonate from 3-deoxy-D-manno-octulosonate and CTP: step 1/1. It functions in the pathway bacterial outer membrane biogenesis; lipopolysaccharide biosynthesis. In terms of biological role, activates KDO (a required 8-carbon sugar) for incorporation into bacterial lipopolysaccharide in Gram-negative bacteria. In Aeromonas salmonicida (strain A449), this protein is 3-deoxy-manno-octulosonate cytidylyltransferase.